Reading from the N-terminus, the 211-residue chain is Large ribosomal subunit protein uL3 (211 aa).

The interval 122-147 (AIKRHGQSRGPMAHGSRYHRRPGSMG) is disordered.

It belongs to the universal ribosomal protein uL3 family. In terms of assembly, part of the 50S ribosomal subunit. Forms a cluster with proteins L14 and L19.

In terms of biological role, one of the primary rRNA binding proteins, it binds directly near the 3'-end of the 23S rRNA, where it nucleates assembly of the 50S subunit. The polypeptide is Large ribosomal subunit protein uL3 (Geobacillus sp. (strain WCH70)).